A 72-amino-acid polypeptide reads, in one-letter code: uncharacterized protein (72 aa).

It belongs to the asfivirus I73R family.

The protein resides in the virion. This is an uncharacterized protein from African swine fever virus (isolate Warthog/Namibia/Wart80/1980) (ASFV).